Here is a 210-residue protein sequence, read N- to C-terminus: Kinetochore protein Spc25 (210 aa).

The stretch at 42–106 (TMENIKRQQH…KKKQERDKLI (65 aa)) forms a coiled coil.

This sequence belongs to the SPC25 family. Component of the Ndc80 complex, which is composed of Ndc80, Nuf2 and Spc25.

The protein resides in the nucleus. It localises to the chromosome. It is found in the centromere. Its subcellular location is the kinetochore. Functionally, acts as a component of the essential kinetochore-associated Ndc80 complex, which is required for chromosome segregation and spindle checkpoint activity during meiosis and mitosis. Required for kinetochore integrity and the organization of stable microtubule binding sites in the outer plate of the kinetochore. Participates in SAC signaling that responds specifically to disruptions in spindle microtubule dynamics. The NDC80 complex synergistically enhances the affinity of the SKA1 complex for microtubules and may allow the NDC80 complex to track depolymerizing microtubules. This chain is Kinetochore protein Spc25, found in Drosophila virilis (Fruit fly).